We begin with the raw amino-acid sequence, 89 residues long: Long neurotoxin 1 (89 aa).

A signal peptide spans 1-21; that stretch reads MKTLLLTLVVVTIVCLDLGDS. 4 cysteine pairs are disulfide-bonded: Cys-24–Cys-41, Cys-34–Cys-58, Cys-62–Cys-74, and Cys-75–Cys-80.

Belongs to the three-finger toxin family. Long-chain subfamily. Type II alpha-neurotoxin sub-subfamily. In terms of tissue distribution, expressed by the venom gland.

The protein localises to the secreted. Functionally, binds with high affinity to muscular (alpha-1/CHRNA1) and neuronal (alpha-7/CHRNA7) nicotinic acetylcholine receptor (nAChR) and inhibits acetylcholine from binding to the receptor, thereby impairing neuromuscular and neuronal transmission. This chain is Long neurotoxin 1, found in Pseudonaja textilis (Eastern brown snake).